Reading from the N-terminus, the 161-residue chain is Cyclic pyranopterin monophosphate synthase (161 aa).

Residues 75–77 (MCH) and 115–116 (ME) contribute to the substrate site. Residue Asp-130 is part of the active site.

It belongs to the MoaC family. Homohexamer; trimer of dimers.

It catalyses the reaction (8S)-3',8-cyclo-7,8-dihydroguanosine 5'-triphosphate = cyclic pyranopterin phosphate + diphosphate. It participates in cofactor biosynthesis; molybdopterin biosynthesis. Its function is as follows. Catalyzes the conversion of (8S)-3',8-cyclo-7,8-dihydroguanosine 5'-triphosphate to cyclic pyranopterin monophosphate (cPMP). This is Cyclic pyranopterin monophosphate synthase from Bacillus cereus (strain G9842).